We begin with the raw amino-acid sequence, 230 residues long: MILNARPEPIAFPTSASALIVVDMQNAYASEGGYLDLAGFDVSATAPIITNIKRAITAARAAGIQVIFFQNGWDPQYVEAGGEGSPNWHKSNALKTMRKQPELMGKLLAKGDWDYALVDELQPQAGDIVIAKPRYSGFFNTQLDSILRAKGIHHLIFTGIATNVCVESTLRDGFFFEYFGVVLEDATHQAGPDFAQKAALYNIETFFGWVSDVETFCNCIAPSAQLSQSA.

Catalysis depends on Asp-23, which acts as the Proton acceptor. Lys-132 is an active-site residue. Cys-165 functions as the Nucleophile in the catalytic mechanism.

It belongs to the isochorismatase family. RutB subfamily.

It catalyses the reaction (Z)-3-ureidoacrylate + H2O + H(+) = (Z)-3-aminoacrylate + NH4(+) + CO2. The enzyme catalyses (Z)-3-ureidoacrylate + H2O = (Z)-3-aminoacrylate + carbamate + H(+). The catalysed reaction is (Z)-2-methylureidoacrylate + H2O + H(+) = (Z)-2-methylaminoacrylate + NH4(+) + CO2. Hydrolyzes ureidoacrylate to form aminoacrylate and carbamate. The carbamate hydrolyzes spontaneously, thereby releasing one of the nitrogen atoms of the pyrimidine ring as ammonia and one of its carbon atoms as CO2. The protein is Ureidoacrylate amidohydrolase RutB of Yersinia enterocolitica serotype O:8 / biotype 1B (strain NCTC 13174 / 8081).